We begin with the raw amino-acid sequence, 537 residues long: MMAKSIQYDTAARHALEQGIDLLTEAVAVTLGPRGRNVVLEQKFGPPQIVNDGITIAKEIELDNPLANTGVALLRQVAAKTNDAAGDGTTTAVVLSHAMVKEGLRNIAAGANPMAIRRGIDQATQFLLDQIAEHALPVKDSNAISQVGTIAAGNDETVGQMIAAAMAKVGQQGVISLEEGQSMQTEVEVTEGMRFDKGYISPYFVTDAERMVTTLDDAYLLLTDKKITLVNALLPILENVTQTGKPLVIIAEDIEKEALATLVLNQLRGTVRVAGVKAPGFGDRRKDLLADIAVLTGGQVISEDTGLTLENATLEMMGRARQVVITKDHTTLISESNEAAVKARCEQIHRLIDETDSSFEKEKLHERLAQLSGGVAVIKVGAATETEMKDRKLKLEDAINATQAAVEEGIVPGGGTTLVHLAPQLEDWSAEHLVGDELIGAMILVRSLSAPLRQIVENAGLNGGVVVEQVKTLPFNTGYDALNNQYVDMFTAGIVDPAKVTSAGLRNAASIAGMVLTTECIIAEQSQATTKDLANAG.

Residues 30–33, 87–91, G414, 480–482, and D496 each bind ATP; these read TLGP, DGTTT, and DAL.

This sequence belongs to the chaperonin (HSP60) family. Forms a cylinder of 14 subunits composed of two heptameric rings stacked back-to-back. Interacts with the co-chaperonin GroES.

The protein localises to the cytoplasm. The catalysed reaction is ATP + H2O + a folded polypeptide = ADP + phosphate + an unfolded polypeptide.. Together with its co-chaperonin GroES, plays an essential role in assisting protein folding. The GroEL-GroES system forms a nano-cage that allows encapsulation of the non-native substrate proteins and provides a physical environment optimized to promote and accelerate protein folding. The polypeptide is Chaperonin GroEL 3 (Acaryochloris marina (strain MBIC 11017)).